An 806-amino-acid chain; its full sequence is Transitional endoplasmic reticulum ATPase (806 aa).

Position 2 is an N-acetylalanine (alanine 2). 2 positions are modified to phosphoserine: serine 3 and serine 7. Lysine 8 is covalently cross-linked (Glycyl lysine isopeptide (Lys-Gly) (interchain with G-Cter in SUMO2)). Serine 13 carries the post-translational modification Phosphoserine. A Glycyl lysine isopeptide (Lys-Gly) (interchain with G-Cter in SUMO2) cross-link involves residue lysine 18. At serine 37 the chain carries Phosphoserine. 247 to 253 (PGTGKTL) lines the ATP pocket. Lysine 315 bears the N6,N6,N6-trimethyllysine; by VCPKMT mark. The ATP site is built by asparagine 348 and histidine 384. Threonine 436 carries the phosphothreonine modification. Position 462 is a phosphoserine (serine 462). 2 positions are modified to N6-acetyllysine: lysine 502 and lysine 505. 521-526 (GCGKTL) serves as a coordination point for ATP. Lysine 668 carries the N6-acetyllysine; alternate modification. At lysine 668 the chain carries N6-succinyllysine; alternate. Phosphoserine is present on serine 702. The segment at 708–727 (RRERERQTNPSAMEVEEDDP) is disordered. Lysine 754 carries the N6-acetyllysine modification. A disordered region spans residues 768–806 (FGSFRFPSGNQGGAGPSQGSGGGTGGSVYTEDNDDDLYG). A phosphoserine mark is found at serine 770, serine 775, and serine 787. Gly residues predominate over residues 777–793 (NQGGAGPSQGSGGGTGG). The segment at 797–806 (TEDNDDDLYG) is interaction with UBXN6. Tyrosine 805 carries the phosphotyrosine modification.

It belongs to the AAA ATPase family. As to quaternary structure, homohexamer. Forms a ring-shaped particle of 12.5 nm diameter, that displays 6-fold radial symmetry. Part of a ternary complex containing STX5A, NSFL1C and VCP. NSFL1C forms a homotrimer that binds to one end of a VCP homohexamer. The complex binds to membranes enriched in phosphatidylethanolamine-containing lipids and promotes Golgi membrane fusion. Binds to a heterodimer of NPLOC4 and UFD1, binding to this heterodimer inhibits Golgi-membrane fusion. Interaction with VCIP135 leads to dissociation of the complex via ATP hydrolysis by VCP. Part of a ternary complex containing NPLOC4, UFD1 and VCP. Interacts with NSFL1C-like protein p37; the complex has membrane fusion activity and is required for Golgi and endoplasmic reticulum biogenesis. Interacts with SELENOS and SYVN1, as well as with DERL1 (via SHP-box motif), DERL2 and DERL3; which probably transfer misfolded proteins from the ER to VCP. Interacts with SVIP and DERL1. Component of a complex required to couple retrotranslocation, ubiquitination and deglycosylation composed of NGLY1, SAKS1, AMFR, VCP and RAD23B. Part of a complex composed of STUB1/CHIP, VCP/p97, CHRNA3, and UBXN2A that modulates the ubiquitination and endoplasmic reticulum-associated degradation (ERAD) of CHRNA3. Within the complex UBXN2A acts as a scaffold protein required for the interaction of CHRNA3 with VCP/p97, this interaction also inhibits CHRNA3 ubiquitination by STUB1/CHIP and subsequently ERAD. Interacts with UBXN2A (via UBX domain); the interaction is required for the interaction of CHRNA3 in the STUB1-VCP-UBXN2A complex. Directly interacts with UBXN4 and RNF19A. Interacts with CASR. Interacts with UBE4B and YOD1. Interacts with clathrin. Interacts with RNF103. Interacts with TRIM13 and TRIM21. Component of a VCP/p97-AMFR/gp78 complex that participates in the final step of the endoplasmic reticulum-associated degradation (ERAD) of HMGCR. Interacts directly with AMFR/gp78 (via its VIM). Interacts with RHBDD1 (via C-terminal domain). Interacts with SPRTN; leading to recruitment to stalled replication forks. Interacts with WASHC5. Interacts with UBOX5. Interacts (via N-terminus) with UBXN7, UBXN8, and probably several other UBX domain-containing proteins (via UBX domains); the interactions are mutually exclusive with VIM-dependent interactions such as those with AMFR and SELENOS. Forms a complex with UBQLN1 and UBXN4. Interacts (via the PIM motif) with RNF31 (via the PUB domain). Interacts with RIGI and RNF125; interaction takes place when RIGI is ubiquitinated via 'Lys-63'-linked ubiquitin on its CARD domains, leading to recruit RNF125 and promote ubiquitination and degradation of RIGI. Interacts with BAG6. Interacts with UBXN10. Interacts with UBXN6; the interaction with UBXN6 is direct and competitive with UFD1. Forms a ternary complex with CAV1 and UBXN6. Interacts with PLAA, UBXN6 and YOD1; may form a complex involved in macroautophagy. Interacts with ANKZF1. Interacts with ubiquitin-binding protein FAF1. Interacts with ZFAND2B (via VIM motif); the interaction is direct. Interacts with ZFAND1 (via its ubiquitin-like region); this interaction occurs in an arsenite-dependent manner. Interacts with CCDC47. Interacts with LMBR1L and UBAC2. Interacts with ATXN3. Interacts with TEX264; bridging VCP to covalent DNA-protein cross-links (DPCs). Mg(2+) serves as cofactor. In terms of processing, ISGylated. Post-translationally, methylation at Lys-315 catalyzed by VCPKMT is increased in the presence of ASPSCR1. Lys-315 methylation may decrease ATPase activity. Phosphorylated by tyrosine kinases in response to T-cell antigen receptor activation. Phosphorylated in mitotic cells.

The protein resides in the cytoplasm. It is found in the cytosol. It localises to the endoplasmic reticulum. The protein localises to the nucleus. Its subcellular location is the stress granule. The catalysed reaction is ATP + H2O = ADP + phosphate + H(+). In terms of biological role, necessary for the fragmentation of Golgi stacks during mitosis and for their reassembly after mitosis. Involved in the formation of the transitional endoplasmic reticulum (tER). The transfer of membranes from the endoplasmic reticulum to the Golgi apparatus occurs via 50-70 nm transition vesicles which derive from part-rough, part-smooth transitional elements of the endoplasmic reticulum (tER). Vesicle budding from the tER is an ATP-dependent process. The ternary complex containing UFD1, VCP and NPLOC4 binds ubiquitinated proteins and is necessary for the export of misfolded proteins from the ER to the cytoplasm, where they are degraded by the proteasome. The NPLOC4-UFD1-VCP complex regulates spindle disassembly at the end of mitosis and is necessary for the formation of a closed nuclear envelope. Regulates E3 ubiquitin-protein ligase activity of RNF19A. Component of the VCP/p97-AMFR/gp78 complex that participates in the final step of the sterol-mediated ubiquitination and endoplasmic reticulum-associated degradation (ERAD) of HMGCR. Mediates the endoplasmic reticulum-associated degradation of CHRNA3 in cortical neurons as part of the STUB1-VCP-UBXN2A complex. Involved in endoplasmic reticulum stress-induced pre-emptive quality control, a mechanism that selectively attenuates the translocation of newly synthesized proteins into the endoplasmic reticulum and reroutes them to the cytosol for proteasomal degradation. Involved in clearance process by mediating G3BP1 extraction from stress granules. Also involved in DNA damage response: recruited to double-strand breaks (DSBs) sites in a RNF8- and RNF168-dependent manner and promotes the recruitment of TP53BP1 at DNA damage sites. Recruited to stalled replication forks by SPRTN: may act by mediating extraction of DNA polymerase eta (POLH) to prevent excessive translesion DNA synthesis and limit the incidence of mutations induced by DNA damage. Together with SPRTN metalloprotease, involved in the repair of covalent DNA-protein cross-links (DPCs) during DNA synthesis. Involved in interstrand cross-link repair in response to replication stress by mediating unloading of the ubiquitinated CMG helicase complex. Mediates extraction of PARP1 trapped to chromatin: recognizes and binds ubiquitinated PARP1 and promotes its removal. Required for cytoplasmic retrotranslocation of stressed/damaged mitochondrial outer-membrane proteins and their subsequent proteasomal degradation. Essential for the maturation of ubiquitin-containing autophagosomes and the clearance of ubiquitinated protein by autophagy. Acts as a negative regulator of type I interferon production by interacting with RIGI: interaction takes place when RIGI is ubiquitinated via 'Lys-63'-linked ubiquitin on its CARD domains, leading to recruit RNF125 and promote ubiquitination and degradation of RIGI. May play a role in the ubiquitin-dependent sorting of membrane proteins to lysosomes where they undergo degradation. May more particularly play a role in caveolins sorting in cells. By controlling the steady-state expression of the IGF1R receptor, indirectly regulates the insulin-like growth factor receptor signaling pathway. In Sus scrofa (Pig), this protein is Transitional endoplasmic reticulum ATPase (VCP).